A 558-amino-acid chain; its full sequence is Glucose-6-phosphate isomerase (558 aa).

The active-site Proton donor is Glu-363. Active-site residues include His-394 and Lys-522.

It belongs to the GPI family.

The protein localises to the cytoplasm. The catalysed reaction is alpha-D-glucose 6-phosphate = beta-D-fructose 6-phosphate. It functions in the pathway carbohydrate biosynthesis; gluconeogenesis. The protein operates within carbohydrate degradation; glycolysis; D-glyceraldehyde 3-phosphate and glycerone phosphate from D-glucose: step 2/4. Catalyzes the reversible isomerization of glucose-6-phosphate to fructose-6-phosphate. The sequence is that of Glucose-6-phosphate isomerase from Blochmanniella floridana.